A 120-amino-acid polypeptide reads, in one-letter code: MAGSPDQEGFFNLLTHVQGDRMEEQRCSLQAGPGQNPESQGGPAPEMDNLMDMLVNTQGRRMDDQRVTVNSLPGFQPIGPKDGMQKRPGTLSPQPLLTPQDPAALSFRRNSSPQPQTQAP.

GoLoco domains lie at 7 to 29 and 47 to 69; these read QEGF…RCSL and MDNL…RVTV. The segment at 16–120 is disordered; the sequence is HVQGDRMEEQ…SSPQPQTQAP (105 aa). The segment covering 108-120 has biased composition (polar residues); that stretch reads RRNSSPQPQTQAP. Serine 111 carries the post-translational modification Phosphoserine.

As to expression, cerebellum (Purkinje cells) and retinal bipolar neurons.

May function as a cell-type specific modulator for G protein-mediated cell signaling. The protein is Purkinje cell protein 2 (Pcp2) of Mus musculus (Mouse).